A 425-amino-acid polypeptide reads, in one-letter code: Trigger factor (425 aa).

In terms of domain architecture, PPIase FKBP-type spans 158-231; the sequence is GDLVRVNMEV…VEEVYKRTLP (74 aa).

This sequence belongs to the FKBP-type PPIase family. Tig subfamily.

It is found in the cytoplasm. The enzyme catalyses [protein]-peptidylproline (omega=180) = [protein]-peptidylproline (omega=0). Functionally, involved in protein export. Acts as a chaperone by maintaining the newly synthesized protein in an open conformation. Functions as a peptidyl-prolyl cis-trans isomerase. In Thermotoga petrophila (strain ATCC BAA-488 / DSM 13995 / JCM 10881 / RKU-1), this protein is Trigger factor.